Reading from the N-terminus, the 157-residue chain is Protein Smg (157 aa).

It belongs to the Smg family.

This Klebsiella pneumoniae (strain 342) protein is Protein Smg.